We begin with the raw amino-acid sequence, 370 residues long: 2-Hydroxyacid oxidase 1 (370 aa).

The 365-residue stretch at 1–365 (MLPRLICIND…DKTLVRKNPL (365 aa)) folds into the FMN hydroxy acid dehydrogenase domain. Tyr-26 is a binding site for glyoxylate. Residues 79–81 (ATA), Ser-108, and Gln-130 contribute to the FMN site. Residue Tyr-132 coordinates glyoxylate. An FMN-binding site is contributed by Thr-158. Residue Arg-167 participates in glyoxylate binding. Residue Lys-184 is modified to N6-succinyllysine. Ser-194 and Ser-230 each carry phosphoserine. The FMN site is built by Lys-236 and Ser-258. The glyoxylate site is built by His-260 and Arg-263. The active-site Proton acceptor is His-260. FMN contacts are provided by residues 291 to 295 (DGGVR) and 314 to 315 (GR). The Microbody targeting signal signature appears at 368–370 (SKI).

This sequence belongs to the FMN-dependent alpha-hydroxy acid dehydrogenase family. As to quaternary structure, homotetramer. Requires FMN as cofactor. Highly expressed in liver.

It is found in the peroxisome matrix. The enzyme catalyses a (2S)-2-hydroxycarboxylate + O2 = a 2-oxocarboxylate + H2O2. The catalysed reaction is glycolate + O2 = glyoxylate + H2O2. It carries out the reaction glyoxylate + O2 + H2O = oxalate + H2O2 + H(+). It catalyses the reaction 2-hydroxyhexadecanoate + O2 = 2-oxohexadecanoate + H2O2. The enzyme catalyses 2-hydroxyoctanoate + O2 = 2-oxooctanoate + H2O2. It functions in the pathway amino-acid biosynthesis; glycine biosynthesis. With respect to regulation, inhibited by its product oxalate. Inhibited by high concentrations of dichlorophenolindophenol (DCIP) in vitro. In terms of biological role, broad substrate specificity (S)-2-hydroxy-acid oxidase that preferentially oxidizes glycolate. The glyoxylate produced by the oxidation of glycolate can then be utilized by alanine-glyoxylate aminotransferase for the peroxisomal synthesis of glycine; this pathway appears to be an important step for the detoxification of glyoxylate which, if allowed to accumulate, may be metabolized to oxalate with formation of kidney stones. Can also catalyze the oxidation of glyoxylate, and long chain hydroxyacids such as 2-hydroxyhexadecanoate and 2-hydroxyoctanoate, albeit with much lower catalytic efficiency. Active in vitro with the artificial electron acceptor 2,6-dichlorophenolindophenol (DCIP), but O2 is believed to be the physiological electron acceptor, leading to the production of H2O2. Is not active on L-lactate and 2-hydroxybutanoate. The polypeptide is 2-Hydroxyacid oxidase 1 (Homo sapiens (Human)).